Consider the following 274-residue polypeptide: tRNA-cytidine(32) 2-sulfurtransferase (274 aa).

The PP-loop motif motif lies at serine 40 to serine 45. Positions 115, 118, and 206 each coordinate [4Fe-4S] cluster.

It belongs to the TtcA family. Homodimer. Requires Mg(2+) as cofactor. [4Fe-4S] cluster serves as cofactor.

Its subcellular location is the cytoplasm. The catalysed reaction is cytidine(32) in tRNA + S-sulfanyl-L-cysteinyl-[cysteine desulfurase] + AH2 + ATP = 2-thiocytidine(32) in tRNA + L-cysteinyl-[cysteine desulfurase] + A + AMP + diphosphate + H(+). Its pathway is tRNA modification. Catalyzes the ATP-dependent 2-thiolation of cytidine in position 32 of tRNA, to form 2-thiocytidine (s(2)C32). The sulfur atoms are provided by the cysteine/cysteine desulfurase (IscS) system. This Pseudomonas syringae pv. tomato (strain ATCC BAA-871 / DC3000) protein is tRNA-cytidine(32) 2-sulfurtransferase.